The following is a 193-amino-acid chain: MPGSSLWLLPPKSHRLNSILPTLIDQTSSHFGSAHRFLPHVTITSEISPSTHSPNPQAWLDSLEISSGDKIEVMFEKLASEDVFFRKLYIKCHKTEGLKKLAVLCRREVEGFGEEREAAKWATESYNPHLSLLYHDCPSIDASGLAEIEKLAQSTGVNLNGQSDLGGWSGGRLVLVPTDKSIDQWSPIAEREL.

The active-site Proton donor/acceptor is the His-40. Thr-42 is a substrate binding site. His-129 acts as the Proton donor/acceptor in catalysis. The substrate site is built by Ser-131 and Tyr-134.

The protein belongs to the 2H phosphoesterase superfamily. CPD1 family.

It localises to the golgi apparatus. It catalyses the reaction a nucleoside 2',3'-cyclic phosphate + H2O = a nucleoside 2'-phosphate + H(+). Its function is as follows. Involved in the metabolism of ADP-ribose 1',2'-cyclic phosphate which is produced as a consequence of tRNA splicing. This is 2',3'-cyclic-nucleotide 3'-phosphodiesterase (CPD1) from Phaeosphaeria nodorum (strain SN15 / ATCC MYA-4574 / FGSC 10173) (Glume blotch fungus).